The chain runs to 288 residues: ATP synthase gamma chain (288 aa).

Belongs to the ATPase gamma chain family. F-type ATPases have 2 components, CF(1) - the catalytic core - and CF(0) - the membrane proton channel. CF(1) has five subunits: alpha(3), beta(3), gamma(1), delta(1), epsilon(1). CF(0) has three main subunits: a, b and c.

It localises to the cell membrane. In terms of biological role, produces ATP from ADP in the presence of a proton gradient across the membrane. The gamma chain is believed to be important in regulating ATPase activity and the flow of protons through the CF(0) complex. The chain is ATP synthase gamma chain from Staphylococcus aureus (strain Mu3 / ATCC 700698).